A 445-amino-acid chain; its full sequence is MREILHIQGGQCGNQIGAKFWEVICDEHGIDHTGKYAGDSDLQLERINVYYNEASGGRFVPRAVLMDLEPGTMDSVRSGPFGQIFRPDNFVFGQSGAGNNWAKGHYTEGAELIDSVLDVVRKEAENCDCLQGFQVCHSLGGGTGSGMGTLLISKIREEYPDRMMLTFSVFPSPKVSDTVVEPYNATLSVHQLVENADECMVLDNEALYDICFRTLKLATPTFGDLNHLISATMSGVTCCLRFPGQLNSDLRKLAVNLIPFPRLHFFMVGFAPLTSRGSQQYRALTVPELTQQMWDSKNMMCAADPRHGRYLTASAMFRGKMSTKEVDEQMLNVQNKNSSYFVEWIPNNVKSSVCDIPPIGLKMSSTFVGNSTSIQEMFRRVSEQFTAMFRRKAFLHWYTGEGMDEMEFTEAESNMNDLVAEYQQYQDATAEDEEYEEEEEEEEET.

Q11, E69, S138, G142, T143, G144, N204, and N226 together coordinate GTP. Position 69 (E69) interacts with Mg(2+). The disordered stretch occupies residues 421-445 (EYQQYQDATAEDEEYEEEEEEEEET). Residues 429 to 445 (TAEDEEYEEEEEEEEET) are compositionally biased toward acidic residues.

Belongs to the tubulin family. As to quaternary structure, dimer of alpha and beta chains. A typical microtubule is a hollow water-filled tube with an outer diameter of 25 nm and an inner diameter of 15 nM. Alpha-beta heterodimers associate head-to-tail to form protofilaments running lengthwise along the microtubule wall with the beta-tubulin subunit facing the microtubule plus end conferring a structural polarity. Microtubules usually have 13 protofilaments but different protofilament numbers can be found in some organisms and specialized cells. It depends on Mg(2+) as a cofactor.

Its subcellular location is the cytoplasm. It is found in the cytoskeleton. Functionally, tubulin is the major constituent of microtubules, a cylinder consisting of laterally associated linear protofilaments composed of alpha- and beta-tubulin heterodimers. Microtubules grow by the addition of GTP-tubulin dimers to the microtubule end, where a stabilizing cap forms. Below the cap, tubulin dimers are in GDP-bound state, owing to GTPase activity of alpha-tubulin. The sequence is that of Tubulin beta-7 chain (TUBB7) from Zea mays (Maize).